Here is a 247-residue protein sequence, read N- to C-terminus: Putative ankyrin repeat protein RBE_1110 (247 aa).

ANK repeat units follow at residues 105-135 (QNKD…CIDY) and 139-171 (EGHN…KLIT).

The polypeptide is Putative ankyrin repeat protein RBE_1110 (Rickettsia bellii (strain RML369-C)).